The following is a 381-amino-acid chain: Succinyl-diaminopimelate desuccinylase (381 aa).

A Zn(2+)-binding site is contributed by H72. D74 is an active-site residue. Residue D103 coordinates Zn(2+). The Proton acceptor role is filled by E133. Residues E134, E163, and H348 each coordinate Zn(2+).

It belongs to the peptidase M20A family. DapE subfamily. Homodimer. Zn(2+) is required as a cofactor. Co(2+) serves as cofactor.

The catalysed reaction is N-succinyl-(2S,6S)-2,6-diaminopimelate + H2O = (2S,6S)-2,6-diaminopimelate + succinate. It functions in the pathway amino-acid biosynthesis; L-lysine biosynthesis via DAP pathway; LL-2,6-diaminopimelate from (S)-tetrahydrodipicolinate (succinylase route): step 3/3. Its function is as follows. Catalyzes the hydrolysis of N-succinyl-L,L-diaminopimelic acid (SDAP), forming succinate and LL-2,6-diaminopimelate (DAP), an intermediate involved in the bacterial biosynthesis of lysine and meso-diaminopimelic acid, an essential component of bacterial cell walls. In Anaplasma marginale (strain Florida), this protein is Succinyl-diaminopimelate desuccinylase.